A 269-amino-acid chain; its full sequence is Phosphatidylglycerol--prolipoprotein diacylglyceryl transferase (269 aa).

The next 7 helical transmembrane spans lie at 17–37, 56–76, 92–112, 120–140, 174–194, 202–222, and 237–257; these read LKIH…WLLA, LVFW…VLFY, WKGG…ALWF, FFEL…AGRI, PSQL…LWLY, MAVS…VEFV, and LTMG…LIWL. Position 139 (Arg-139) interacts with a 1,2-diacyl-sn-glycero-3-phospho-(1'-sn-glycerol).

This sequence belongs to the Lgt family.

The protein localises to the cell inner membrane. The enzyme catalyses L-cysteinyl-[prolipoprotein] + a 1,2-diacyl-sn-glycero-3-phospho-(1'-sn-glycerol) = an S-1,2-diacyl-sn-glyceryl-L-cysteinyl-[prolipoprotein] + sn-glycerol 1-phosphate + H(+). Its pathway is protein modification; lipoprotein biosynthesis (diacylglyceryl transfer). In terms of biological role, catalyzes the transfer of the diacylglyceryl group from phosphatidylglycerol to the sulfhydryl group of the N-terminal cysteine of a prolipoprotein, the first step in the formation of mature lipoproteins. The sequence is that of Phosphatidylglycerol--prolipoprotein diacylglyceryl transferase from Pseudomonas putida (strain W619).